We begin with the raw amino-acid sequence, 378 residues long: Carbazole 1,9a-dioxygenase, terminal oxygenase component CarAa (378 aa).

Residues 29-135 (WYPVRLASEI…VEEAKGLIFV (107 aa)) enclose the Rieske domain. Positions 69, 71, 90, and 93 each coordinate [2Fe-2S] cluster.

As to quaternary structure, homotrimer. Carbazole 1,9a-dioxygenase complex consists of a terminal oxygenase component CarAa, a ferredoxin reductase component fdr and a ferredoxin component CarAc. [2Fe-2S] cluster serves as cofactor.

It carries out the reaction 9H-carbazole + NADH + O2 + H(+) = 2'-aminobiphenyl-2,3-diol + NAD(+). It catalyses the reaction 9H-carbazole + NADPH + O2 + H(+) = 2'-aminobiphenyl-2,3-diol + NADP(+). In terms of biological role, part of the multicomponent carbazole 1,9a-dioxygenase (CARDO), that converts carbazole (CAR) into 2-aminobiphenyl-2,3-diol. Catalyzes the dioxygenation at the angular (C-9a) and adjacent (C-1) positions of carbazole to yield a highly unstable cis-hydrodiol intermediate which is spontaneously converted to 2-aminobiphenyl-2,3-diol. The protein is Carbazole 1,9a-dioxygenase, terminal oxygenase component CarAa (carAa) of Sphingomonas sp.